Here is a 331-residue protein sequence, read N- to C-terminus: Bifunctional nuclease 1 (331 aa).

Positions 126–261 constitute a BFN domain; sequence CVQNNPRVLR…RIAYNNGLKV (136 aa). A UVR domain is found at 291–326; it reads EAQEFDLVRNMLVAAVEERYKDAAQYRDQLFMFRAK.

It belongs to the bifunctional nuclease family.

Its subcellular location is the nucleus. Bifunctional nuclease with both RNase and DNase activities. Involved in basal defense response. Participates in abscisic acid-derived callose deposition following infection by a necrotrophic pathogen. The protein is Bifunctional nuclease 1 (BBD1) of Oryza sativa subsp. indica (Rice).